The chain runs to 544 residues: Probable protein kinase UbiB (544 aa).

A helical transmembrane segment spans residues 1 to 21 (MIFGELRRLYLIIGVMLSYGL). Positions 123–500 (DFQQEPLASA…HVRQSQSRFL (378 aa)) constitute a Protein kinase domain. ATP contacts are provided by residues 129–137 (LASASIAQV) and K151. Residue D286 is the Proton acceptor of the active site. 2 consecutive transmembrane segments (helical) span residues 499-519 (FLFGIGATLLLIGTFLMTQGA) and 520-540 (DEGSLPAWLMAAGTVSWIIGW).

The protein belongs to the ABC1 family. UbiB subfamily.

It localises to the cell inner membrane. It functions in the pathway cofactor biosynthesis; ubiquinone biosynthesis [regulation]. Functionally, is probably a protein kinase regulator of UbiI activity which is involved in aerobic coenzyme Q (ubiquinone) biosynthesis. The protein is Probable protein kinase UbiB of Sodalis glossinidius (strain morsitans).